A 143-amino-acid chain; its full sequence is Large ribosomal subunit protein uL13 (143 aa).

This sequence belongs to the universal ribosomal protein uL13 family. In terms of assembly, part of the 50S ribosomal subunit.

This protein is one of the early assembly proteins of the 50S ribosomal subunit, although it is not seen to bind rRNA by itself. It is important during the early stages of 50S assembly. This Symbiobacterium thermophilum (strain DSM 24528 / JCM 14929 / IAM 14863 / T) protein is Large ribosomal subunit protein uL13.